A 420-amino-acid chain; its full sequence is Proteinase-activated receptor 1 (420 aa).

A signal peptide spans 1–20 (MMELRVLLLLLLLTLLGAMG). A propeptide spans 21-42 (SLCLANSDTQAKGAHSNNMTIK) (removed for receptor activation). Asn-38 carries N-linked (GlcNAc...) asparagine glycosylation. At 43–101 (TFRIFDDSESEFEEIPWDELDESGEGSGDQAPVSRSARKPIRRNITKEAEQYLSSQWLT) the chain is on the extracellular side. Residues 61-80 (ELDESGEGSGDQAPVSRSAR) form a disordered region. Asn-86 carries N-linked (GlcNAc...) asparagine glycosylation. The chain crosses the membrane as a helical span at residues 102–127 (KFVPSLYTVVFIVGLPLNLLAIIIFL). Residues 128 to 136 (FKMKVRKPA) are Cytoplasmic-facing. The helical transmembrane segment at 137 to 156 (VVYMLNLAIADVFFVSVLPF) threads the bilayer. Residues 157–175 (KIAYHLSGNDWLFGPGMCR) lie on the Extracellular side of the membrane. An intrachain disulfide couples Cys-174 to Cys-253. Residues 176–197 (IVTAIFYCNMYCSVLLIASISV) form a helical membrane-spanning segment. At 198 to 217 (DRFLAVVYPMHSLSWRTMSR) the chain is on the cytoplasmic side. A helical membrane pass occupies residues 218–238 (AYMACSFIWLISIASTIPLLV). Residues 239–267 (TEQTQKIPRLDITTCHDVLDLKDLKDFYI) are Extracellular-facing. A helical transmembrane segment spans residues 268-287 (YYFSSFCLLFFFVPFIITTI). Topologically, residues 288 to 310 (CYIGIIRSLSSSSIENSCKKTRA) are cytoplasmic. The chain crosses the membrane as a helical span at residues 311 to 333 (LFLAVVVLCVFIICFGPTNVLFL). The Extracellular segment spans residues 334-345 (THYLQEANEFLY). Residues 346 to 369 (FAYILSACVGSVSCCLDPLIYYYA) form a helical membrane-spanning segment. The Cytoplasmic portion of the chain corresponds to 370–420 (SSQCQRYLYSLLCCRKVSEPGSSTGQLMSTAMKNDNCSTNAKSSIYKKLLA).

This sequence belongs to the G-protein coupled receptor 1 family. In terms of processing, proteolytic cleavage generates a new N-terminus that functions as a tethered ligand.

It is found in the cell membrane. In terms of biological role, high affinity receptor that binds the activated thrombin, leading to calcium release from intracellular stores. The thrombin-activated receptor signaling pathway is mediated through PTX-insensitive G proteins, activation of phospholipase C resulting in the production of 1D-myo-inositol 1,4,5-trisphosphate (InsP3) which binds to InsP3 receptors causing calcium release from the stores. The protein is Proteinase-activated receptor 1 of Xenopus laevis (African clawed frog).